We begin with the raw amino-acid sequence, 741 residues long: Subtilisin-like protease SBT4.4 (741 aa).

The first 24 residues, 1–24 (MAKGTTFIFLFSSLLVLSLSSVSA), serve as a signal peptide directing secretion. The propeptide at 25 to 112 (DKDDHGDQQV…VFPSRKLKLQ (88 aa)) is activation peptide. The region spanning 34–111 (VYIVYLGSLP…SVFPSRKLKL (78 aa)) is the Inhibitor I9 domain. In terms of domain architecture, Peptidase S8 spans 116-589 (SWNFMGLKEG…SGHVDPIDAI (474 aa)). Asp-144 (charge relay system) is an active-site residue. 2 N-linked (GlcNAc...) asparagine glycosylation sites follow: Asn-175 and Asn-195. Residue His-204 is the Charge relay system of the active site. 2 N-linked (GlcNAc...) asparagine glycosylation sites follow: Asn-227 and Asn-357. Residues 359–445 (TNYPLVYGKS…LSNDDYKSLV (87 aa)) enclose the PA domain. Asn-449 carries an N-linked (GlcNAc...) asparagine glycan. Residue Ser-528 is the Charge relay system of the active site. Residues Asn-565, Asn-610, Asn-623, and Asn-654 are each glycosylated (N-linked (GlcNAc...) asparagine).

This sequence belongs to the peptidase S8 family. The C-terminal propeptide is autocleaved.

It is found in the secreted. This is Subtilisin-like protease SBT4.4 from Arabidopsis thaliana (Mouse-ear cress).